The chain runs to 202 residues: MSENAGTPKKQGRNNGAVVMMCLSFVFGMGAMSYAAVPLYRIFCQVTGYNGTTQRVDQVSSVVLDRTMRVTFDANVAPGLQWDFKPVEREVNPKIGETIQVNFTAENRSNETQRGQAVFNVTPGEAGVYFNKVQCFCFTETDLKPGEKLDMPVVFYIDPEIVKAVESKNIHTVTLSYTFYPKEGPKPVASNEGGAEKIEKKL.

Topologically, residues 1–14 are cytoplasmic; sequence MSENAGTPKKQGRN. Residues 15-37 traverse the membrane as a helical; Signal-anchor for type II membrane protein segment; sequence NGAVVMMCLSFVFGMGAMSYAAV. Over 38–202 the chain is Periplasmic; that stretch reads PLYRIFCQVT…GGAEKIEKKL (165 aa).

Belongs to the COX11/CtaG family.

The protein resides in the cell inner membrane. Its function is as follows. Exerts its effect at some terminal stage of cytochrome c oxidase synthesis, probably by being involved in the insertion of the copper B into subunit I. The polypeptide is Cytochrome c oxidase assembly protein CtaG (Rhizobium johnstonii (strain DSM 114642 / LMG 32736 / 3841) (Rhizobium leguminosarum bv. viciae)).